Here is a 385-residue protein sequence, read N- to C-terminus: S-adenosylmethionine synthase (385 aa).

An ATP-binding site is contributed by His-16. Asp-18 lines the Mg(2+) pocket. A K(+)-binding site is contributed by Glu-44. The L-methionine site is built by Glu-57 and Gln-100. The interval 100–110 is flexible loop; the sequence is QSPDINQGVDR. Residues 164–166, 230–231, Asp-239, 245–246, Ala-262, and Lys-266 contribute to the ATP site; these read DGK, KF, and RK. Residue Asp-239 participates in L-methionine binding. Residue Lys-270 participates in L-methionine binding.

Belongs to the AdoMet synthase family. As to quaternary structure, homotetramer; dimer of dimers. The cofactor is Mg(2+). K(+) is required as a cofactor.

It is found in the cytoplasm. The enzyme catalyses L-methionine + ATP + H2O = S-adenosyl-L-methionine + phosphate + diphosphate. It functions in the pathway amino-acid biosynthesis; S-adenosyl-L-methionine biosynthesis; S-adenosyl-L-methionine from L-methionine: step 1/1. Functionally, catalyzes the formation of S-adenosylmethionine (AdoMet) from methionine and ATP. The overall synthetic reaction is composed of two sequential steps, AdoMet formation and the subsequent tripolyphosphate hydrolysis which occurs prior to release of AdoMet from the enzyme. The polypeptide is S-adenosylmethionine synthase (Helicobacter pylori (strain ATCC 700392 / 26695) (Campylobacter pylori)).